Here is an 87-residue protein sequence, read N- to C-terminus: Beta-defensin 109 (87 aa).

A signal peptide spans 1–22 (MRLHLLLLILLLFSILLSPVRG). Cystine bridges form between C31–C59, C38–C53, and C43–C60.

The protein belongs to the beta-defensin family.

It localises to the secreted. In terms of biological role, has antibacterial activity. This is Beta-defensin 109 (DEFB109) from Pan troglodytes (Chimpanzee).